The chain runs to 156 residues: Small ribosomal subunit protein uS7 (156 aa).

It belongs to the universal ribosomal protein uS7 family. As to quaternary structure, part of the 30S ribosomal subunit. Contacts proteins S9 and S11.

Functionally, one of the primary rRNA binding proteins, it binds directly to 16S rRNA where it nucleates assembly of the head domain of the 30S subunit. Is located at the subunit interface close to the decoding center, probably blocks exit of the E-site tRNA. The chain is Small ribosomal subunit protein uS7 from Herminiimonas arsenicoxydans.